We begin with the raw amino-acid sequence, 264 residues long: Hemin import ATP-binding protein HmuV (264 aa).

The region spanning 2–241 (IEVSGVSVRL…ETMLSVFGLR (240 aa)) is the ABC transporter domain. 34-41 (GPNGSGKT) is an ATP binding site.

The protein belongs to the ABC transporter superfamily. Heme (hemin) importer (TC 3.A.1.14.5) family. In terms of assembly, the complex is composed of two ATP-binding proteins (HmuV), two transmembrane proteins (HmuU) and a solute-binding protein (HmuT).

Its subcellular location is the cell inner membrane. Part of the ABC transporter complex HmuTUV involved in hemin import. Responsible for energy coupling to the transport system. The chain is Hemin import ATP-binding protein HmuV from Rhizobium leguminosarum.